A 512-amino-acid polypeptide reads, in one-letter code: 2-isopropylmalate synthase (512 aa).

The Pyruvate carboxyltransferase domain occupies 4-266 (IEIFDTTLRD…TTKLNLKEIA (263 aa)). Mn(2+)-binding residues include D13, H201, H203, and N237. Residues 390–512 (QLESVQLAYG…GEPTPVSATI (123 aa)) are regulatory domain.

This sequence belongs to the alpha-IPM synthase/homocitrate synthase family. LeuA type 1 subfamily. In terms of assembly, homodimer. Requires Mn(2+) as cofactor.

The protein resides in the cytoplasm. The enzyme catalyses 3-methyl-2-oxobutanoate + acetyl-CoA + H2O = (2S)-2-isopropylmalate + CoA + H(+). Its pathway is amino-acid biosynthesis; L-leucine biosynthesis; L-leucine from 3-methyl-2-oxobutanoate: step 1/4. Functionally, catalyzes the condensation of the acetyl group of acetyl-CoA with 3-methyl-2-oxobutanoate (2-ketoisovalerate) to form 3-carboxy-3-hydroxy-4-methylpentanoate (2-isopropylmalate). This chain is 2-isopropylmalate synthase, found in Brevibacillus brevis (strain 47 / JCM 6285 / NBRC 100599).